A 203-amino-acid polypeptide reads, in one-letter code: Thymidylate kinase (203 aa).

14 to 21 (GGEGIGKS) lines the ATP pocket.

Belongs to the thymidylate kinase family.

The enzyme catalyses dTMP + ATP = dTDP + ADP. Functionally, phosphorylation of dTMP to form dTDP in both de novo and salvage pathways of dTTP synthesis. This Rickettsia peacockii (strain Rustic) protein is Thymidylate kinase.